Consider the following 186-residue polypeptide: Guanylate kinase (186 aa).

Residues 4 to 182 (GKLIVLTGPS…TLQNLDKILF (179 aa)) enclose the Guanylate kinase-like domain. An ATP-binding site is contributed by 11–18 (GPSGVGKG).

The protein belongs to the guanylate kinase family.

It localises to the cytoplasm. The enzyme catalyses GMP + ATP = GDP + ADP. Essential for recycling GMP and indirectly, cGMP. The chain is Guanylate kinase from Trichodesmium erythraeum (strain IMS101).